Here is a 115-residue protein sequence, read N- to C-terminus: Replication initiation control protein YabA (115 aa).

4 residues coordinate Zn(2+): His-90, Cys-92, Cys-106, and Cys-109.

This sequence belongs to the YabA family. Homotetramer. Interacts with both DnaA and DnaN, acting as a bridge between these two proteins. Zn(2+) serves as cofactor.

The protein resides in the cytoplasm. The protein localises to the nucleoid. Its function is as follows. Involved in control of chromosome replication initiation. Inhibits the cooperative binding of DnaA to the oriC region, thus negatively regulating initiation of chromosome replication. Inhibits the ability of DnaA-ATP to form a helix on DNA; does not disassemble preformed DnaA-DNA helices. Decreases the residence time of DnaA on the chromosome at its binding sites (oriC, replication forks and promoter-binding sites). Tethers DnaA to the replication machinery via the DNA polymerase beta sliding clamp subunit (dnaN). Associates with oriC and other DnaA targets on the chromosome in a DnaA-dependent manner. In Staphylococcus aureus (strain bovine RF122 / ET3-1), this protein is Replication initiation control protein YabA.